A 51-amino-acid polypeptide reads, in one-letter code: Perinerin (51 aa).

Antibacterial activity against both Gram-negative and Gram-positive bacteria. Shows marked activity against P.aeruginosa, B.megaterium, A.viridans, moderate activity against E.coli K-12, S.aureus and M.luteus, and minor activity against P.vulgaris. Antifungal activity against P.heliothis. This is Perinerin from Perinereis aibuhitensis (Korean lugworm).